The primary structure comprises 173 residues: Alpha-crystallin A chain (173 aa).

N-acetylmethionine is present on methionine 1. A required for complex formation with BFSP1 and BFSP2 region spans residues methionine 1 to glutamate 63. Deamidated glutamine; partial is present on glutamine 6. At serine 45 the chain carries Phosphoserine. Deamidated glutamine; partial is present on glutamine 50. The sHSP domain occupies leucine 52 to serine 162. Lysine 70 is subject to N6-acetyllysine. The residue at position 90 (glutamine 90) is a Deamidated glutamine; partial. Position 99 is an N6-acetyllysine (lysine 99). Histidine 100 contacts Zn(2+). Asparagine 101 carries the post-translational modification Deamidated asparagine; partial. Glutamate 102 and histidine 107 together coordinate Zn(2+). Serine 122 is modified (phosphoserine). Asparagine 123 carries the post-translational modification Deamidated asparagine; partial. Residues proline 144–serine 173 form a disordered region. Positions glycine 153–proline 167 are enriched in basic and acidic residues. Histidine 154 is a Zn(2+) binding site. A glycan (O-linked (GlcNAc) serine) is linked at serine 162.

This sequence belongs to the small heat shock protein (HSP20) family. Heteromer composed of three CRYAA and one CRYAB subunits. Inter-subunit bridging via zinc ions enhances stability, which is crucial as there is no protein turn over in the lens. Can also form homodimers and homotetramers (dimers of dimers) which serve as the building blocks of homooligomers. Within homooligomers, the zinc-binding motif is created from residues of 3 different molecules. His-100 and Glu-102 from one molecule are ligands of the zinc ion, and His-107 and His-154 residues from additional molecules complete the site with tetrahedral coordination geometry. Part of a complex required for lens intermediate filament formation composed of BFSP1, BFSP2 and CRYAA. Post-translationally, acetylation at Lys-70 may increase chaperone activity. Undergoes age-dependent proteolytical cleavage at the C-terminus.

Its subcellular location is the cytoplasm. The protein resides in the nucleus. In terms of biological role, contributes to the transparency and refractive index of the lens. Acts as a chaperone, preventing aggregation of various proteins under a wide range of stress conditions. Required for the correct formation of lens intermediate filaments as part of a complex composed of BFSP1, BFSP2 and CRYAA. In Ovis aries (Sheep), this protein is Alpha-crystallin A chain (CRYAA).